The chain runs to 228 residues: Glucose-induced degradation protein 8 homolog (228 aa).

The region spanning Ser29 to Thr61 is the LisH domain. The CTLH domain occupies Ser67–Glu124.

It belongs to the GID8 family.

Its subcellular location is the cytoplasm. The protein resides in the nucleus. Its function is as follows. Core component of the CTLH E3 ubiquitin-protein ligase complex that mediates ubiquitination and subsequent proteasomal degradation of target proteins. Acts as a positive regulator of Wnt signaling pathway by promoting beta-catenin (CTNNB1) nuclear accumulation. The protein is Glucose-induced degradation protein 8 homolog of Dictyostelium discoideum (Social amoeba).